Here is a 43-residue protein sequence, read N- to C-terminus: Protein PsbN (43 aa).

Residues 5–27 form a helical membrane-spanning segment; that stretch reads TVLSIFISSLLLGITGYSIYTAF.

It belongs to the PsbN family.

It localises to the plastid. The protein localises to the chloroplast thylakoid membrane. Its function is as follows. May play a role in photosystem I and II biogenesis. In Porphyra purpurea (Red seaweed), this protein is Protein PsbN.